We begin with the raw amino-acid sequence, 419 residues long: Methionine aminopeptidase 2 (419 aa).

The tract at residues methionine 1 to proline 69 is disordered. A compositionally biased stretch (basic and acidic residues) spans valine 11–serine 29. A compositionally biased stretch (acidic residues) spans glutamate 30–serine 41. Positions lysine 48–isoleucine 61 are enriched in basic residues. Position 172 (histidine 172) interacts with substrate. A divalent metal cation is bound by residues aspartate 192, aspartate 203, and histidine 272. Histidine 280 provides a ligand contact to substrate. A divalent metal cation is bound by residues glutamate 305 and glutamate 400.

Belongs to the peptidase M24A family. Methionine aminopeptidase eukaryotic type 2 subfamily. It depends on Co(2+) as a cofactor. The cofactor is Zn(2+). Mn(2+) is required as a cofactor. Requires Fe(2+) as cofactor.

It is found in the cytoplasm. It catalyses the reaction Release of N-terminal amino acids, preferentially methionine, from peptides and arylamides.. Functionally, cotranslationally removes the N-terminal methionine from nascent proteins. The N-terminal methionine is often cleaved when the second residue in the primary sequence is small and uncharged (Met-Ala-, Cys, Gly, Pro, Ser, Thr, or Val). The protein is Methionine aminopeptidase 2 of Debaryomyces hansenii (strain ATCC 36239 / CBS 767 / BCRC 21394 / JCM 1990 / NBRC 0083 / IGC 2968) (Yeast).